Reading from the N-terminus, the 1316-residue chain is DNA-directed RNA polymerase subunit beta' (1316 aa).

Zn(2+) contacts are provided by Cys-60, Cys-62, Cys-75, and Cys-78. Residues 183–209 (ELEEEGAKSDVRRKVRDGGEREMRQLR) are disordered. Mg(2+) is bound by residues Asp-535, Asp-537, and Asp-539. Zn(2+)-binding residues include Cys-890, Cys-966, Cys-973, and Cys-976.

The protein belongs to the RNA polymerase beta' chain family. As to quaternary structure, the RNAP catalytic core consists of 2 alpha, 1 beta, 1 beta' and 1 omega subunit. When a sigma factor is associated with the core the holoenzyme is formed, which can initiate transcription. It depends on Mg(2+) as a cofactor. The cofactor is Zn(2+).

The catalysed reaction is RNA(n) + a ribonucleoside 5'-triphosphate = RNA(n+1) + diphosphate. Functionally, DNA-dependent RNA polymerase catalyzes the transcription of DNA into RNA using the four ribonucleoside triphosphates as substrates. The protein is DNA-directed RNA polymerase subunit beta' of Mycolicibacterium gilvum (strain PYR-GCK) (Mycobacterium gilvum (strain PYR-GCK)).